Consider the following 354-residue polypeptide: Ferredoxin--NADP reductase, chloroplastic (354 aa).

The transit peptide at 1–35 directs the protein to the chloroplast; sequence MASLRKPSNHADRACSRRLRVATRVAGRRMCRPVA. Residues 69–198 enclose the FAD-binding FR-type domain; that stretch reads KAPFKAKVRS…TGPTGKVLLL (130 aa). K118 and K124 each carry N6,N6,N6-trimethyllysine. FAD is bound by residues 130–133, 151–153, and Y157; these read RLYS and CVR. NADP(+) is bound by residues S133 and R153. K170 carries the N6,N6-dimethyllysine modification. FAD-binding positions include 172 to 174 and T213; that span reads LCS. NADP(+) contacts are provided by residues T213, 245 to 246, 275 to 276, K285, 313 to 314, and E352; these read VG, SR, and GL.

It belongs to the ferredoxin--NADP reductase type 1 family. It depends on FAD as a cofactor.

Its subcellular location is the plastid. The protein resides in the chloroplast stroma. The protein localises to the chloroplast thylakoid membrane. The enzyme catalyses 2 reduced [2Fe-2S]-[ferredoxin] + NADP(+) + H(+) = 2 oxidized [2Fe-2S]-[ferredoxin] + NADPH. The protein operates within energy metabolism; photosynthesis. May play a key role in regulating the relative amounts of cyclic and non-cyclic electron flow to meet the demands of the plant for ATP and reducing power. This chain is Ferredoxin--NADP reductase, chloroplastic (PETH), found in Chlamydomonas reinhardtii (Chlamydomonas smithii).